Here is a 263-residue protein sequence, read N- to C-terminus: Triosephosphate isomerase (263 aa).

10–12 (NWK) serves as a coordination point for substrate. His104 acts as the Electrophile in catalysis. The active-site Proton acceptor is the Glu176. Substrate contacts are provided by residues Gly182, Ser221, and 242 to 243 (GG).

It belongs to the triosephosphate isomerase family. As to quaternary structure, homodimer.

It localises to the cytoplasm. It catalyses the reaction D-glyceraldehyde 3-phosphate = dihydroxyacetone phosphate. The protein operates within carbohydrate biosynthesis; gluconeogenesis. Its pathway is carbohydrate degradation; glycolysis; D-glyceraldehyde 3-phosphate from glycerone phosphate: step 1/1. Involved in the gluconeogenesis. Catalyzes stereospecifically the conversion of dihydroxyacetone phosphate (DHAP) to D-glyceraldehyde-3-phosphate (G3P). The polypeptide is Triosephosphate isomerase (Haemophilus influenzae (strain ATCC 51907 / DSM 11121 / KW20 / Rd)).